A 211-amino-acid chain; its full sequence is tRNA (guanine-N(7)-)-methyltransferase (211 aa).

The S-adenosyl-L-methionine site is built by Glu-43, Glu-68, Asp-95, and Asp-117. Asp-117 is an active-site residue. Residues Lys-121, Asp-153, and 190 to 193 contribute to the substrate site; that span reads TEYE.

This sequence belongs to the class I-like SAM-binding methyltransferase superfamily. TrmB family.

It catalyses the reaction guanosine(46) in tRNA + S-adenosyl-L-methionine = N(7)-methylguanosine(46) in tRNA + S-adenosyl-L-homocysteine. It participates in tRNA modification; N(7)-methylguanine-tRNA biosynthesis. Functionally, catalyzes the formation of N(7)-methylguanine at position 46 (m7G46) in tRNA. This Staphylococcus saprophyticus subsp. saprophyticus (strain ATCC 15305 / DSM 20229 / NCIMB 8711 / NCTC 7292 / S-41) protein is tRNA (guanine-N(7)-)-methyltransferase.